The sequence spans 393 residues: NAD(P)H-quinone oxidoreductase subunit H, chloroplastic (393 aa).

It belongs to the complex I 49 kDa subunit family. As to quaternary structure, NDH is composed of at least 16 different subunits, 5 of which are encoded in the nucleus.

The protein resides in the plastid. It localises to the chloroplast thylakoid membrane. The enzyme catalyses a plastoquinone + NADH + (n+1) H(+)(in) = a plastoquinol + NAD(+) + n H(+)(out). The catalysed reaction is a plastoquinone + NADPH + (n+1) H(+)(in) = a plastoquinol + NADP(+) + n H(+)(out). In terms of biological role, NDH shuttles electrons from NAD(P)H:plastoquinone, via FMN and iron-sulfur (Fe-S) centers, to quinones in the photosynthetic chain and possibly in a chloroplast respiratory chain. The immediate electron acceptor for the enzyme in this species is believed to be plastoquinone. Couples the redox reaction to proton translocation, and thus conserves the redox energy in a proton gradient. The chain is NAD(P)H-quinone oxidoreductase subunit H, chloroplastic from Lobularia maritima (Sweet alyssum).